The following is a 529-amino-acid chain: Delayed-rectifier potassium channel regulatory subunit KCNS1 (529 aa).

The Cytoplasmic segment spans residues 1-217 (MLMLLVRGTH…LTMENPGYSL (217 aa)). Residues 218–239 (PSKLFSCVSIGVVLASIAAMCI) form a helical membrane-spanning segment. Residues 240-270 (HSLPEYQAREAAAAVATVAAGRSAEDVRDDP) lie on the Extracellular side of the membrane. Residues 271–293 (VLRRLEYFCIAWFSFEVSSRLLL) traverse the membrane as a helical segment. Over 294–304 (APSTRNFFCHP) the chain is Cytoplasmic. A helical transmembrane segment spans residues 305 to 322 (LNLIDIVSVLPFYLTLLA). Residues 323-342 (SVALGGNNHGGTSGEELGHL) lie on the Extracellular side of the membrane. The chain crosses the membrane as a helical; Voltage-sensor span at residues 343–363 (GKVVQVFRLMRIFRVLKLARH). Topologically, residues 364 to 378 (STGLRSLGATLKHSY) are cytoplasmic. A helical transmembrane segment spans residues 379–400 (REVGILLLYLAVGVSVFSGVAY). The Extracellular portion of the chain corresponds to 401 to 413 (TAEKEEDVGFDTI). Positions 414 to 425 (PACWWWGTVSMT) form an intramembrane region, helical. Positions 426 to 431 (TVGYGD) match the Selectivity filter motif. Residues 426–433 (TVGYGDVV) lie within the membrane without spanning it. The Extracellular segment spans residues 434–440 (PVTLAGK). A helical transmembrane segment spans residues 441 to 469 (LAASGCILGGILVVALPITIIFNKFSHFY). Residues 470-529 (QRQKALEAAVRNSGHREFEDLLSSVDGVSDASLETSRETSQEGRSADLEAPSESPKPQIY) are Cytoplasmic-facing. The interval 498 to 529 (SDASLETSRETSQEGRSADLEAPSESPKPQIY) is disordered. Basic and acidic residues predominate over residues 504–516 (TSRETSQEGRSAD).

Belongs to the potassium channel family. S (TC 1.A.1.2) subfamily. Kv9.1/KCNS1 sub-subfamily. As to quaternary structure, heterotetramer with KCNB1. Heterotetramer with KCNB2. Does not form homomultimers.

The protein localises to the cell membrane. Potassium channel regulatory subunit that modulate the delayed rectifier voltage-gated potassium channel activity of KCNB1 and KCNB2 by altering their kinetics, expression levels, and shifting the half-inactivation potential to more polarized values. While it does not form functional channels on its own, it can form functional heterotetrameric channels with KCNB1 and KCNB2. Each regulatory subunit has unique regulatory properties that can lead to extensive inhibition, significant changes in kinetics, and/or substantial shifts in the voltage dependencies of the inactivation process. The polypeptide is Delayed-rectifier potassium channel regulatory subunit KCNS1 (Lemur catta (Ring-tailed lemur)).